A 145-amino-acid chain; its full sequence is Methylglyoxal synthase (145 aa).

Residues 1 to 145 form the MGS-like domain; the sequence is MNSKKKIALV…YYQKIRKDNF (145 aa). Residues His-12, Lys-16, 38 to 41, and 58 to 59 each bind substrate; these read TGTT and SG. Residue Asp-64 is the Proton donor/acceptor of the active site. Substrate is bound at residue His-91.

The protein belongs to the methylglyoxal synthase family.

It carries out the reaction dihydroxyacetone phosphate = methylglyoxal + phosphate. Catalyzes the formation of methylglyoxal from dihydroxyacetone phosphate. The chain is Methylglyoxal synthase from Clostridium acetobutylicum (strain ATCC 824 / DSM 792 / JCM 1419 / IAM 19013 / LMG 5710 / NBRC 13948 / NRRL B-527 / VKM B-1787 / 2291 / W).